The following is a 143-amino-acid chain: Putative protein FPV235 (143 aa).

The chain is Putative protein FPV235 from Vertebrata (FPV).